The following is a 197-amino-acid chain: Translation machinery-associated protein 22 (197 aa).

The region spanning 103 to 174 (IRIKRVERNK…DVREFLIKNY (72 aa)) is the SUI1 domain.

It belongs to the DENR family. Interacts with the 40S ribosomal subunit.

The protein localises to the cytoplasm. This chain is Translation machinery-associated protein 22 (tma22), found in Botryotinia fuckeliana (strain B05.10) (Noble rot fungus).